Consider the following 277-residue polypeptide: RNA-binding protein pno-1 (277 aa).

2 disordered regions span residues 1–52 (MATS…KLVK) and 72–100 (DEDA…GESR). The segment covering 8–27 (FDDELPMEEGMPELLDDEDV) has biased composition (acidic residues). A compositionally biased stretch (polar residues) spans 30-40 (TLPSLLEQNLD). Acidic residues predominate over residues 72-81 (DEDATADTAD). The KH domain maps to 198 to 250 (GDHVSRAIGRIAGKDGRTKLVIENTTKTRIVVANTKIHILGAYQNLKLARNAV).

This sequence belongs to the PNO1 family. As to quaternary structure, part of the small subunit (SSU) processome, composed of more than 70 proteins and the RNA chaperone small nucleolar RNA (snoRNA) U3.

Its subcellular location is the nucleus. It is found in the nucleolus. Its function is as follows. Part of the small subunit (SSU) processome, first precursor of the small eukaryotic ribosomal subunit. During the assembly of the SSU processome in the nucleolus, many ribosome biogenesis factors, an RNA chaperone and ribosomal proteins associate with the nascent pre-rRNA and work in concert to generate RNA folding, modifications, rearrangements and cleavage as well as targeted degradation of pre-ribosomal RNA by the RNA exosome. Positively regulates dimethylation of two adjacent adenosines in the loop of a conserved hairpin near the 3'-end of 18S rRNA. This Caenorhabditis elegans protein is RNA-binding protein pno-1.